A 368-amino-acid polypeptide reads, in one-letter code: Spore germination protein B2 (368 aa).

The next 10 membrane-spanning stretches (helical) occupy residues 10 to 30, 43 to 63, 82 to 102, 120 to 140, 145 to 165, 187 to 207, 217 to 237, 282 to 302, 308 to 328, and 338 to 358; these read FMQTLIMISSTLIGAGVLTLP, LMILLQGVIFIIIVLLFLPFL, FIGFLLNLYICLYFIGIVCFQ, MAVVVFIFLAVAIYHVGGGVY, VYAYIFPITLIIFMMLLMFSF, LFPKTLLYFSGFEIIFYLVPF, AVALGIATSTLFYSITLLIVI, FACMLGSFKGAHIGLTEIFHL, AWLLTAMLAATFFITMYPKDL, and LGYAFLIVITIPFFVWFLSWI.

This sequence belongs to the amino acid-polyamine-organocation (APC) superfamily. Spore germination protein (SGP) (TC 2.A.3.9) family.

The protein localises to the cell membrane. Its function is as follows. Involved in the response to the germinative mixture of L-asparagine, glucose, fructose and potassium ions (AGFK). Could be an amino acid transporter. Cannot stimulate germination in the absence of gerD and gerK gene products (fructose and glucose receptors, respectively). This is Spore germination protein B2 (gerBB) from Bacillus subtilis (strain 168).